The chain runs to 286 residues: 33 kDa chaperonin (286 aa).

Cystine bridges form between Cys-233-Cys-235 and Cys-267-Cys-270.

Belongs to the HSP33 family. Post-translationally, under oxidizing conditions two disulfide bonds are formed involving the reactive cysteines. Under reducing conditions zinc is bound to the reactive cysteines and the protein is inactive.

The protein localises to the cytoplasm. Functionally, redox regulated molecular chaperone. Protects both thermally unfolding and oxidatively damaged proteins from irreversible aggregation. Plays an important role in the bacterial defense system toward oxidative stress. This is 33 kDa chaperonin from Histophilus somni (strain 129Pt) (Haemophilus somnus).